A 1368-amino-acid chain; its full sequence is DNA-directed RNA polymerase subunit beta (1368 aa).

This sequence belongs to the RNA polymerase beta chain family. In terms of assembly, the RNAP catalytic core consists of 2 alpha, 1 beta, 1 beta' and 1 omega subunit. When a sigma factor is associated with the core the holoenzyme is formed, which can initiate transcription.

It catalyses the reaction RNA(n) + a ribonucleoside 5'-triphosphate = RNA(n+1) + diphosphate. Functionally, DNA-dependent RNA polymerase catalyzes the transcription of DNA into RNA using the four ribonucleoside triphosphates as substrates. The protein is DNA-directed RNA polymerase subunit beta of Legionella pneumophila subsp. pneumophila (strain Philadelphia 1 / ATCC 33152 / DSM 7513).